The sequence spans 335 residues: tRNA N6-adenosine threonylcarbamoyltransferase (335 aa).

The Fe cation site is built by His-110 and His-114. Residues 132–136 (LVSGG), Asp-165, Gly-178, and Asn-271 each bind substrate. Residue Asp-299 coordinates Fe cation.

The protein belongs to the KAE1 / TsaD family. Fe(2+) is required as a cofactor.

The protein localises to the cytoplasm. The enzyme catalyses L-threonylcarbamoyladenylate + adenosine(37) in tRNA = N(6)-L-threonylcarbamoyladenosine(37) in tRNA + AMP + H(+). In terms of biological role, required for the formation of a threonylcarbamoyl group on adenosine at position 37 (t(6)A37) in tRNAs that read codons beginning with adenine. Is involved in the transfer of the threonylcarbamoyl moiety of threonylcarbamoyl-AMP (TC-AMP) to the N6 group of A37, together with TsaE and TsaB. TsaD likely plays a direct catalytic role in this reaction. The polypeptide is tRNA N6-adenosine threonylcarbamoyltransferase (Campylobacter jejuni subsp. jejuni serotype O:2 (strain ATCC 700819 / NCTC 11168)).